The chain runs to 180 residues: MAALLMPRRNKGMRTRLGCLSHKSDSCSDFTAILPDKPNRALKRLSTEEATRWADSFDVLLSHKYGVAAFRAFLKTEFSEENLEFWLACEEFKKTRSTAKLVTKAHRIFEEFVDVQAPREVNIDFQTREATRKNMQEPSLTCFDQAQGKVHSLMEKDSYPRFLRSKMYLDLLSQSQRRLS.

Serine 26 is modified (phosphoserine). The RGS domain occupies 56-171 (SFDVLLSHKY…FLRSKMYLDL (116 aa)).

As to quaternary structure, interacts with GNAO1 and GNAI3. As to expression, expressed at high levels in brain. Very little expression detected in other tissues. Detected in Purkinje cells in the cerebellum.

It localises to the cell membrane. It is found in the membrane. The protein localises to the perikaryon. Its subcellular location is the cell projection. The protein resides in the dendrite. It localises to the nucleus. In terms of biological role, regulates G protein-coupled receptor signaling cascades, including signaling via muscarinic acetylcholine receptor CHRM2 and dopamine receptor DRD2. Inhibits signal transduction by increasing the GTPase activity of G protein alpha subunits, thereby driving them into their inactive GDP-bound form. Modulates the activity of potassium channels that are activated in response to DRD2 and CHRM2 signaling. The sequence is that of Regulator of G-protein signaling 8 (Rgs8) from Rattus norvegicus (Rat).